A 263-amino-acid chain; its full sequence is Lens fiber major intrinsic protein (263 aa).

Residues 1–9 lie on the Cytoplasmic side of the membrane; the sequence is MWELRSASF. Residues 10-29 form a helical membrane-spanning segment; it reads WRAICAEFFASLFYVFFGLG. At 30–41 the chain is on the extracellular side; the sequence is ASLRWAPGPLHV. A helical membrane pass occupies residues 42–59; it reads LQVALAFGLALATLVQAV. Topologically, residues 60 to 61 are cytoplasmic; that stretch reads GH. The discontinuously helical intramembrane region spans 62–77; it reads ISGAHVNPAVTFAFLV. Residues 68–70 carry the NPA 1 motif; it reads NPA. Residues 78–82 lie on the Cytoplasmic side of the membrane; that stretch reads GSQMS. A helical membrane pass occupies residues 83–106; the sequence is LLRAICYMVAQLLGAVAGAAVLYS. The Extracellular segment spans residues 107-127; sequence VTPPAVRGNLALNTLHPGVSV. The helical transmembrane segment at 128 to 148 threads the bilayer; it reads GQATIVEIFLTLQFVLCIFAT. The Cytoplasmic portion of the chain corresponds to 149–156; that stretch reads YDERRNGR. A helical membrane pass occupies residues 157–175; the sequence is LGSVALAVGFSLTLGHLFG. Over 176–178 the chain is Extracellular; that stretch reads MYY. The discontinuously helical intramembrane region spans 179-193; that stretch reads TGAGMNPARSFAPAI. The short motif at 184-186 is the NPA 2 element; that stretch reads NPA. At 194–200 the chain is on the extracellular side; the sequence is LTRNFTN. A helical membrane pass occupies residues 201 to 222; it reads HWVYWVGPVIGAGLGSLLYDFL. Over 223–263 the chain is Cytoplasmic; it reads LFPRLKSVSERLSILKGSRPSESNGQPEVTGEPVELKTQAL. The tract at residues 227–237 is interaction with CALM; sequence LKSVSERLSIL. Residue Ser235 is modified to Phosphoserine. The interval 239–263 is disordered; the sequence is GSRPSESNGQPEVTGEPVELKTQAL. At Ser243 the chain carries Phosphoserine; by PKA. Phosphoserine is present on Ser245. Asn246 carries the deamidated asparagine modification.

This sequence belongs to the MIP/aquaporin (TC 1.A.8) family. In terms of assembly, homotetramer; each monomer provides an independent water pore. Two homotetramers on opposing membranes can dimerize, forming a cell-cell junction. Interacts with CALM; the calcium-calmodulin/CALM complex interacts with the cytoplasmic domains of two aquaporins, leading to channel closure. Interacts with BFSP1 (via C-terminus); prevents calcium-dependent inhibition of the water channel activity. Post-translationally, fatty acylated at Met-1 and Lys-238. The acyl modifications, in decreasing order of ion abundance, are: oleoyl (C18:1) &gt; palmitoyl (C16:0) &gt; stearoyl (C18:0) &gt; eicosenoyl (C20:1) &gt; dihomo-gamma-linolenoyl (C20:3) &gt; palmitoleoyl (C16:1) &gt; eicosadienoyl (C20:2). Subject to partial proteolytic cleavage in the eye lens core. Partial proteolysis promotes interactions between tetramers from adjoining membranes. In terms of tissue distribution, major component of lens fiber junctions.

It localises to the cell membrane. The protein resides in the cell junction. It carries out the reaction H2O(in) = H2O(out). The water channel activity is inhibited by calcium through calmodulin/CALM. In terms of biological role, aquaporins form homotetrameric transmembrane channels, with each monomer independently mediating water transport across the plasma membrane along its osmotic gradient. Specifically expressed in lens fiber cells, this aquaporin is crucial for maintaining lens water homeostasis and transparency. Beyond water permeability, it also acts as a cell-to-cell adhesion molecule, forming thin junctions between lens fiber cells that are essential for maintaining the ordered structure and transparency of the lens. The chain is Lens fiber major intrinsic protein from Bos taurus (Bovine).